We begin with the raw amino-acid sequence, 101 residues long: Venom peptide Pc (101 aa).

Positions 1-20 (MSHLRIAVIFLCTLFALTAG) are cleaved as a signal peptide.

It belongs to the scorpion La1-like peptide family. Contains 4 disulfide bonds. In terms of tissue distribution, expressed by the venom gland.

The protein localises to the secreted. This chain is Venom peptide Pc, found in Pandinus cavimanus (Tanzanian red clawed scorpion).